Reading from the N-terminus, the 124-residue chain is Replication restart protein PriB (124 aa).

Residues I12–D112 enclose the SSB domain.

The protein belongs to the PriB family. Homodimer. Interacts with PriA and DnaT. Component of the replication restart primosome. Primosome assembly occurs via a 'hand-off' mechanism. PriA binds to replication forks, subsequently PriB then DnaT bind; DnaT then displaces ssDNA to generate the helicase loading substrate.

Its function is as follows. Involved in the restart of stalled replication forks, which reloads the replicative helicase on sites other than the origin of replication; the PriA-PriB pathway is the major replication restart pathway. During primosome assembly it facilitates complex formation between PriA and DnaT on DNA; stabilizes PriA on DNA. Stimulates the DNA unwinding activity of PriA helicase. This Haemophilus ducreyi (strain 35000HP / ATCC 700724) protein is Replication restart protein PriB.